The following is a 255-amino-acid chain: Thiazole synthase (255 aa).

Lysine 96 functions as the Schiff-base intermediate with DXP in the catalytic mechanism. 1-deoxy-D-xylulose 5-phosphate contacts are provided by residues glycine 157, 184–185, and 206–207; these read AG and NT.

This sequence belongs to the ThiG family. Homotetramer. Forms heterodimers with either ThiH or ThiS.

Its subcellular location is the cytoplasm. The enzyme catalyses [ThiS sulfur-carrier protein]-C-terminal-Gly-aminoethanethioate + 2-iminoacetate + 1-deoxy-D-xylulose 5-phosphate = [ThiS sulfur-carrier protein]-C-terminal Gly-Gly + 2-[(2R,5Z)-2-carboxy-4-methylthiazol-5(2H)-ylidene]ethyl phosphate + 2 H2O + H(+). The protein operates within cofactor biosynthesis; thiamine diphosphate biosynthesis. In terms of biological role, catalyzes the rearrangement of 1-deoxy-D-xylulose 5-phosphate (DXP) to produce the thiazole phosphate moiety of thiamine. Sulfur is provided by the thiocarboxylate moiety of the carrier protein ThiS. In vitro, sulfur can be provided by H(2)S. In Clostridium acetobutylicum (strain ATCC 824 / DSM 792 / JCM 1419 / IAM 19013 / LMG 5710 / NBRC 13948 / NRRL B-527 / VKM B-1787 / 2291 / W), this protein is Thiazole synthase.